We begin with the raw amino-acid sequence, 271 residues long: Very long chain fatty acid elongase 3 (271 aa).

Asparagine 6 carries an N-linked (GlcNAc...) asparagine glycan. A run of 7 helical transmembrane segments spans residues 30-50 (FLEEYWVSSFLIVVVYLLLIV), 67-87 (PLILWSFFLAIFSILGTLRMW), 116-136 (FWSFLFLLSKVVELGDTAFII), 141-161 (PLIFVHWYHHSTVLLFTSFGY), 165-187 (VPSGGWFMTMNFGVHSVMYTYYT), 199-219 (LPMVITSLQILQMVLGTIFGI), and 236-256 (HFFWSFMLYGTYFILFAHFFH).

Belongs to the ELO family. ELOVL3 subfamily. In terms of assembly, interacts with TECR. In terms of processing, N-Glycosylated. As to expression, expressed in brown adipose tissue and liver. In the skin, strong expressed in the cells of the inner layer of the outer root sheath of the hair follicles and in the sebocytes of the sebaceous glands. Hardly detectable in the epidermis and not at all in fibroblasts.

It is found in the endoplasmic reticulum membrane. The catalysed reaction is a very-long-chain acyl-CoA + malonyl-CoA + H(+) = a very-long-chain 3-oxoacyl-CoA + CO2 + CoA. The enzyme catalyses eicosanoyl-CoA + malonyl-CoA + H(+) = 3-oxodocosanoyl-CoA + CO2 + CoA. It catalyses the reaction hexadecanoyl-CoA + malonyl-CoA + H(+) = 3-oxooctadecanoyl-CoA + CO2 + CoA. It carries out the reaction octadecanoyl-CoA + malonyl-CoA + H(+) = 3-oxoeicosanoyl-CoA + CO2 + CoA. The catalysed reaction is (9Z)-octadecenoyl-CoA + malonyl-CoA + H(+) = 3-oxo-(11Z)-eicosenoyl-CoA + CO2 + CoA. The enzyme catalyses (9Z,12Z)-octadecadienoyl-CoA + malonyl-CoA + H(+) = (11Z,14Z)-3-oxoicosa-11,14-dienoyl-CoA + CO2 + CoA. It catalyses the reaction (9Z,12Z,15Z)-octadecatrienoyl-CoA + malonyl-CoA + H(+) = (11Z,14Z,17Z)-3-oxoeicosatrienoyl-CoA + CO2 + CoA. It carries out the reaction docosanoyl-CoA + malonyl-CoA + H(+) = 3-oxotetracosanoyl-CoA + CO2 + CoA. The catalysed reaction is tetradecanoyl-CoA + malonyl-CoA + H(+) = 3-oxohexadecanoyl-CoA + CO2 + CoA. It participates in lipid metabolism; polyunsaturated fatty acid biosynthesis. Functionally, catalyzes the first and rate-limiting reaction of the four reactions that constitute the long-chain fatty acids elongation cycle. This endoplasmic reticulum-bound enzymatic process allows the addition of 2 carbons to the chain of long- and very long-chain fatty acids (VLCFAs) per cycle. Condensing enzyme that exhibits activity toward saturated and unsaturated acyl-CoA substrates with higher activity toward C18 acyl-CoAs, especially C18:0 acyl-CoAs. May participate in the production of saturated and monounsaturated VLCFAs of different chain lengths that are involved in multiple biological processes as precursors of membrane lipids and lipid mediators. Participates in the formation of certain VLCFA and triglycerides in certain cells of the hair follicles and the sebaceous glands, required for skin barrier function. Critical enzyme for lipid accumulation and metabolic activity in brown adipocytes during the early phase of the tissue recruitment. Plays a role in lipid storage and in resistance to diet-induced obesity. This Mus musculus (Mouse) protein is Very long chain fatty acid elongase 3.